We begin with the raw amino-acid sequence, 350 residues long: UDP-N-acetylenolpyruvoylglucosamine reductase (350 aa).

An FAD-binding PCMH-type domain is found at 24–195 (HVDATARWLL…VAVEFNLPLL (172 aa)). Arg172 is a catalytic residue. Ser245 serves as the catalytic Proton donor. Glu342 is a catalytic residue.

It belongs to the MurB family. Requires FAD as cofactor.

The protein localises to the cytoplasm. It catalyses the reaction UDP-N-acetyl-alpha-D-muramate + NADP(+) = UDP-N-acetyl-3-O-(1-carboxyvinyl)-alpha-D-glucosamine + NADPH + H(+). It participates in cell wall biogenesis; peptidoglycan biosynthesis. Cell wall formation. This Xanthomonas campestris pv. campestris (strain 8004) protein is UDP-N-acetylenolpyruvoylglucosamine reductase.